The following is a 70-amino-acid chain: U2-agatoxin-Ao1a (70 aa).

Residues 1-20 (MRAIISLFLISAMVFSMIQA) form the signal peptide. A propeptide spanning residues 21 to 34 (VPEEEGLQLSEDER) is cleaved from the precursor. 3 disulfides stabilise this stretch: Cys-37–Cys-53, Cys-44–Cys-58, and Cys-52–Cys-68. Leu-69 is modified (leucine amide).

It belongs to the neurotoxin 01 (U2-agtx) family. Expressed by the venom gland.

The protein localises to the secreted. Insect active toxin causing rapid but reversible paralysis in crickets. No activity shown in mammals. Suppresses the excitatory postsynaptic potentials evoked in lobster neuromuscular synaptic preparations, possibly by blocking the presynaptic calcium channel. Induces instantaneous reversible paralysis when injected into crickets. Does not show effect on mammalian Cav2.1/CACNA1A, Cav2.2/CACNA1B and Cav2.3/CACNA1E. This is U2-agatoxin-Ao1a from Agelena orientalis (Funnel-web spider).